The sequence spans 248 residues: 1-(5-phosphoribosyl)-5-[(5-phosphoribosylamino)methylideneamino] imidazole-4-carboxamide isomerase (248 aa).

D8 (proton acceptor) is an active-site residue. Residue D129 is the Proton donor of the active site.

This sequence belongs to the HisA/HisF family.

It localises to the cytoplasm. The enzyme catalyses 1-(5-phospho-beta-D-ribosyl)-5-[(5-phospho-beta-D-ribosylamino)methylideneamino]imidazole-4-carboxamide = 5-[(5-phospho-1-deoxy-D-ribulos-1-ylimino)methylamino]-1-(5-phospho-beta-D-ribosyl)imidazole-4-carboxamide. The protein operates within amino-acid biosynthesis; L-histidine biosynthesis; L-histidine from 5-phospho-alpha-D-ribose 1-diphosphate: step 4/9. The protein is 1-(5-phosphoribosyl)-5-[(5-phosphoribosylamino)methylideneamino] imidazole-4-carboxamide isomerase of Rhizobium etli (strain CIAT 652).